An 87-amino-acid polypeptide reads, in one-letter code: U3-theraphotoxin-Hhn1a 13 (87 aa).

A signal peptide spans 1–24; sequence MVNMKASMFLTSAGLVPLFVVCYA. The propeptide occupies 25–52; it reads SESEEKEFPKEMLSSIFAVDNDFKQEER. Cystine bridges form between C54/C67, C61/C72, and C66/C79.

It belongs to the neurotoxin 10 (Hwtx-1) family. 51 (Hntx-8) subfamily. Hntx-8 sub-subfamily. In terms of tissue distribution, expressed by the venom gland.

The protein resides in the secreted. Functionally, ion channel inhibitor. This Cyriopagopus hainanus (Chinese bird spider) protein is U3-theraphotoxin-Hhn1a 13.